We begin with the raw amino-acid sequence, 313 residues long: tRNA dimethylallyltransferase (313 aa).

17–24 (GPTASGKT) contributes to the ATP binding site. Residue 19–24 (TASGKT) participates in substrate binding. Interaction with substrate tRNA regions lie at residues 42-45 (DSAL), 166-170 (QRLSR), and 247-252 (RCVGYR).

Belongs to the IPP transferase family. As to quaternary structure, monomer. The cofactor is Mg(2+).

It carries out the reaction adenosine(37) in tRNA + dimethylallyl diphosphate = N(6)-dimethylallyladenosine(37) in tRNA + diphosphate. Functionally, catalyzes the transfer of a dimethylallyl group onto the adenine at position 37 in tRNAs that read codons beginning with uridine, leading to the formation of N6-(dimethylallyl)adenosine (i(6)A). The polypeptide is tRNA dimethylallyltransferase (Pectobacterium atrosepticum (strain SCRI 1043 / ATCC BAA-672) (Erwinia carotovora subsp. atroseptica)).